The sequence spans 682 residues: Protein SPT2 homolog (682 aa).

The tract at residues 1–569 is important for interaction with DNA; sequence MDFREILLIA…PLLSGYRSAQ (569 aa). K37 is covalently cross-linked (Glycyl lysine isopeptide (Lys-Gly) (interchain with G-Cter in SUMO2)). Positions 46–82 form a coiled coil; the sequence is AFLRRKEEELRQKALEEKKRKEELVKKRIELKHDKKA. The segment at 80-170 is disordered; it reads KKARAMAKRT…SAPSPMNFTD (91 aa). The segment covering 101 to 111 has biased composition (basic and acidic residues); the sequence is VEEKTKKKQLV. Positions 121 to 131 are enriched in acidic residues; sequence QEYDVEEEDFI. The span at 156–165 shows a compositional bias: low complexity; sequence KAPLKSAPSP. K186 is covalently cross-linked (Glycyl lysine isopeptide (Lys-Gly) (interchain with G-Cter in SUMO2)). Over residues 187–208 the composition is skewed to basic and acidic residues; sequence VVKKAEDRPLTAEELREREFLE. Disordered stretches follow at residues 187–533 and 549–595; these read VVKK…TKPR and RSSN…DEYD. Polar residues-rich tracts occupy residues 267 to 280, 317 to 334, 371 to 393, 400 to 409, and 419 to 432; these read STAS…SSPK, STCS…TQKS, PGSN…TLSS, QNGSSSSGPE, and ASNS…LNGT. S277 is subject to Phosphoserine. Composition is skewed to low complexity over residues 435–460 and 490–504; these read PGRP…RPVG and SGPG…PAGR. The tract at residues 570–682 is important for interaction with histones; the sequence is GPQRLPFPTG…RRKAKKLKRH (113 aa). K581 is subject to N6-acetyllysine. Residues 586 to 595 are compositionally biased toward acidic residues; sequence YEEDDDDEYD. S596 carries the phosphoserine modification. 2 stretches are compositionally biased toward basic and acidic residues: residues 641 to 652 and 663 to 672; these read SWKEQQKEEAKS and EMRREEEELK. The tract at residues 641-682 is disordered; the sequence is SWKEQQKEEAKSLRLGMQEDLEEMRREEEELKRRKAKKLKRH. Residues 642 to 682 are a coiled coil; it reads WKEQQKEEAKSLRLGMQEDLEEMRREEEELKRRKAKKLKRH. Residues 673 to 682 show a composition bias toward basic residues; sequence RRKAKKLKRH.

Belongs to the SPT2 family. Interacts with histones. Interacts with a heterotetrameric complex formed by histone H3 and H4, especially when the histone tetramer is not bound to DNA. Interacts with histone H3.3.

The protein resides in the nucleus. It is found in the nucleolus. Functionally, histone chaperone that stabilizes pre-existing histone tetramers and regulates replication-independent histone exchange on chromatin. Required for normal chromatin refolding in the coding region of transcribed genes, and for the suppression of spurious transcription. Binds DNA and histones and promotes nucleosome assembly (in vitro). Facilitates formation of tetrameric histone complexes containing histone H3 and H4. Modulates RNA polymerase 1-mediated transcription. Binds DNA, with a preference for branched DNA species, such as Y-form DNA and Holliday junction DNA. The chain is Protein SPT2 homolog (Spty2d1) from Mus musculus (Mouse).